We begin with the raw amino-acid sequence, 95 residues long: Small ribosomal subunit protein uS19 (95 aa).

The protein belongs to the universal ribosomal protein uS19 family.

Its function is as follows. Protein S19 forms a complex with S13 that binds strongly to the 16S ribosomal RNA. This Clostridium kluyveri (strain NBRC 12016) protein is Small ribosomal subunit protein uS19.